A 251-amino-acid chain; its full sequence is Adenylate kinase (251 aa).

Residue 46–51 coordinates ATP; sequence GAGKGT. Positions 66–95 are NMP; sequence ATGDMLRSQVQQQTPLGVEAKKIMDAGGLV. AMP-binding positions include Thr-67, Arg-72, 93 to 95, 122 to 125, and Gln-129; these read GLV and GFPR. The LID stretch occupies residues 163–200; the sequence is GRLVHPASGRSYHKVFNPPKKEMIDDITGEALVQRSDD. ATP is bound by residues Arg-164 and 173-174; that span reads SY. Positions 197 and 208 each coordinate AMP. Gln-236 lines the ATP pocket.

Belongs to the adenylate kinase family. AK2 subfamily. As to quaternary structure, monomer.

The protein resides in the cytoplasm. It localises to the cytosol. Its subcellular location is the mitochondrion intermembrane space. The enzyme catalyses AMP + ATP = 2 ADP. Catalyzes the reversible transfer of the terminal phosphate group between ATP and AMP. Plays an important role in cellular energy homeostasis and in adenine nucleotide metabolism. Adenylate kinase activity is critical for regulation of the phosphate utilization and the AMP de novo biosynthesis pathways. The chain is Adenylate kinase from Yarrowia lipolytica (strain CLIB 122 / E 150) (Yeast).